A 335-amino-acid polypeptide reads, in one-letter code: Biotin synthase (335 aa).

The Radical SAM core domain occupies 53 to 276; the sequence is VEIEGIVSVK…RTILRFAGGR (224 aa). Cysteine 66, cysteine 70, and cysteine 73 together coordinate [4Fe-4S] cluster. 4 residues coordinate [2Fe-2S] cluster: cysteine 109, cysteine 142, cysteine 201, and arginine 271.

This sequence belongs to the radical SAM superfamily. Biotin synthase family. As to quaternary structure, homodimer. The cofactor is [4Fe-4S] cluster. [2Fe-2S] cluster is required as a cofactor.

It carries out the reaction (4R,5S)-dethiobiotin + (sulfur carrier)-SH + 2 reduced [2Fe-2S]-[ferredoxin] + 2 S-adenosyl-L-methionine = (sulfur carrier)-H + biotin + 2 5'-deoxyadenosine + 2 L-methionine + 2 oxidized [2Fe-2S]-[ferredoxin]. It functions in the pathway cofactor biosynthesis; biotin biosynthesis; biotin from 7,8-diaminononanoate: step 2/2. Catalyzes the conversion of dethiobiotin (DTB) to biotin by the insertion of a sulfur atom into dethiobiotin via a radical-based mechanism. In Acidothermus cellulolyticus (strain ATCC 43068 / DSM 8971 / 11B), this protein is Biotin synthase.